A 145-amino-acid chain; its full sequence is D-aminoacyl-tRNA deacylase (145 aa).

The short motif at 137–138 (GP) is the Gly-cisPro motif, important for rejection of L-amino acids element.

Belongs to the DTD family. As to quaternary structure, homodimer.

It localises to the cytoplasm. It catalyses the reaction glycyl-tRNA(Ala) + H2O = tRNA(Ala) + glycine + H(+). It carries out the reaction a D-aminoacyl-tRNA + H2O = a tRNA + a D-alpha-amino acid + H(+). An aminoacyl-tRNA editing enzyme that deacylates mischarged D-aminoacyl-tRNAs. Also deacylates mischarged glycyl-tRNA(Ala), protecting cells against glycine mischarging by AlaRS. Acts via tRNA-based rather than protein-based catalysis; rejects L-amino acids rather than detecting D-amino acids in the active site. By recycling D-aminoacyl-tRNA to D-amino acids and free tRNA molecules, this enzyme counteracts the toxicity associated with the formation of D-aminoacyl-tRNA entities in vivo and helps enforce protein L-homochirality. This is D-aminoacyl-tRNA deacylase from Methylacidiphilum infernorum (isolate V4) (Methylokorus infernorum (strain V4)).